The sequence spans 271 residues: Beta-lactamase (271 aa).

The active-site Acyl-ester intermediate is Ser46. Position 210 to 212 (210 to 212 (KTG)) interacts with substrate.

It belongs to the class-A beta-lactamase family. In terms of assembly, monomer.

The enzyme catalyses a beta-lactam + H2O = a substituted beta-amino acid. Functionally, hydrolyzes broad-spectrum beta-lactam antibiotics. Active against cephalosporins. The sequence is that of Beta-lactamase from Proteus vulgaris.